The primary structure comprises 207 residues: ATP-dependent Clp protease proteolytic subunit 1 (207 aa).

The active-site Nucleophile is the Ser103. Residue His128 is part of the active site.

Belongs to the peptidase S14 family. As to quaternary structure, fourteen ClpP subunits assemble into 2 heptameric rings which stack back to back to give a disk-like structure with a central cavity, resembling the structure of eukaryotic proteasomes.

Its subcellular location is the cytoplasm. The enzyme catalyses Hydrolysis of proteins to small peptides in the presence of ATP and magnesium. alpha-casein is the usual test substrate. In the absence of ATP, only oligopeptides shorter than five residues are hydrolyzed (such as succinyl-Leu-Tyr-|-NHMec, and Leu-Tyr-Leu-|-Tyr-Trp, in which cleavage of the -Tyr-|-Leu- and -Tyr-|-Trp bonds also occurs).. Its function is as follows. Cleaves peptides in various proteins in a process that requires ATP hydrolysis. Has a chymotrypsin-like activity. Plays a major role in the degradation of misfolded proteins. The protein is ATP-dependent Clp protease proteolytic subunit 1 of Synechococcus sp. (strain CC9605).